A 563-amino-acid chain; its full sequence is Phosphomethylpyrimidine synthase (563 aa).

Substrate-binding positions include N180, M209, Y238, H274, 294 to 296, 335 to 338, and E374; these read SRG and DGLR. Residue H378 coordinates Zn(2+). Residue Y401 coordinates substrate. H442 contributes to the Zn(2+) binding site. [4Fe-4S] cluster-binding residues include C522, C525, and C530.

Belongs to the ThiC family. [4Fe-4S] cluster serves as cofactor.

The enzyme catalyses 5-amino-1-(5-phospho-beta-D-ribosyl)imidazole + S-adenosyl-L-methionine = 4-amino-2-methyl-5-(phosphooxymethyl)pyrimidine + CO + 5'-deoxyadenosine + formate + L-methionine + 3 H(+). Its pathway is cofactor biosynthesis; thiamine diphosphate biosynthesis. Functionally, catalyzes the synthesis of the hydroxymethylpyrimidine phosphate (HMP-P) moiety of thiamine from aminoimidazole ribotide (AIR) in a radical S-adenosyl-L-methionine (SAM)-dependent reaction. The polypeptide is Phosphomethylpyrimidine synthase (Geobacillus thermodenitrificans (strain NG80-2)).